Here is a 723-residue protein sequence, read N- to C-terminus: Fatty acid oxidation complex subunit alpha (723 aa).

Residues 1-189 (MIYQAETLQV…KIGLLDAVVD (189 aa)) form an enoyl-CoA hydratase/isomerase region. Position 296 (aspartate 296) interacts with substrate. The interval 311–723 (SKDTQRAAVL…FYGAQQQGSI (413 aa)) is 3-hydroxyacyl-CoA dehydrogenase. Residues methionine 325, aspartate 344, 401 to 403 (VVE), lysine 408, and serine 430 each bind NAD(+). Histidine 451 functions as the For 3-hydroxyacyl-CoA dehydrogenase activity in the catalytic mechanism. Asparagine 454 is a binding site for NAD(+). Substrate contacts are provided by asparagine 501 and tyrosine 661.

It in the N-terminal section; belongs to the enoyl-CoA hydratase/isomerase family. In the C-terminal section; belongs to the 3-hydroxyacyl-CoA dehydrogenase family. Heterotetramer of two alpha chains (FadB) and two beta chains (FadA).

The catalysed reaction is a (3S)-3-hydroxyacyl-CoA + NAD(+) = a 3-oxoacyl-CoA + NADH + H(+). The enzyme catalyses a (3S)-3-hydroxyacyl-CoA = a (2E)-enoyl-CoA + H2O. It catalyses the reaction a 4-saturated-(3S)-3-hydroxyacyl-CoA = a (3E)-enoyl-CoA + H2O. It carries out the reaction (3S)-3-hydroxybutanoyl-CoA = (3R)-3-hydroxybutanoyl-CoA. The catalysed reaction is a (3Z)-enoyl-CoA = a 4-saturated (2E)-enoyl-CoA. The enzyme catalyses a (3E)-enoyl-CoA = a 4-saturated (2E)-enoyl-CoA. It participates in lipid metabolism; fatty acid beta-oxidation. In terms of biological role, involved in the aerobic and anaerobic degradation of long-chain fatty acids via beta-oxidation cycle. Catalyzes the formation of 3-oxoacyl-CoA from enoyl-CoA via L-3-hydroxyacyl-CoA. It can also use D-3-hydroxyacyl-CoA and cis-3-enoyl-CoA as substrate. The chain is Fatty acid oxidation complex subunit alpha from Vibrio campbellii (strain ATCC BAA-1116).